Here is a 376-residue protein sequence, read N- to C-terminus: 2-hydroxypropyl-CoM lyase (376 aa).

Zn(2+)-binding residues include histidine 218, cysteine 220, and cysteine 341.

It belongs to the vitamin-B12 independent methionine synthase family. In terms of assembly, homohexamer. Component I of the aliphatic epoxide carboxylation complex together with components II, III and IV. Zn(2+) is required as a cofactor.

It carries out the reaction (R)-2-hydroxypropyl-coenzyme M = (R)-1,2-epoxypropane + coenzyme M. The enzyme catalyses (S)-2-hydroxypropyl-coenzyme M = (S)-1,2-epoxypropane + coenzyme M. It participates in alkene metabolism; propylene degradation. With respect to regulation, inhibited by methylepoxypropane. Inhibited by the zinc chelator 4-(2-pyridylazo)resorcinol (PAR), in the presence of p- (hydroxymercuri)benzenesulfonic acid (PMPS), and by EDTA. Not inhibited by the coenzyme M analog 2-bromoethanesulfonate (BES). Its function is as follows. Involved in aliphatic epoxide carboxylation. Catalyzes the addition of coenzyme M (CoM) to either R- or S-epoxypropane to form the thioether conjugate 2-hydroxypropyl-CoM. Catalyzes the reaction of CoM with R-epoxypropane at a rate approximately twice of that with S-epoxypropane. The CoM analogs 2-mercaptopropionate, 2-mercaptoethanol and cysteine substitute poorly for CoM as the thiol substrate. The chain is 2-hydroxypropyl-CoM lyase from Xanthobacter autotrophicus (strain ATCC BAA-1158 / Py2).